The chain runs to 227 residues: Cytochrome c oxidase subunit 2 (227 aa).

Residues 1 to 14 (MAYPFQLGLQDATS) are Mitochondrial intermembrane-facing. Residues 15-45 (PIMEELLHFHDHTLMIVFLISSLVLYIISLM) traverse the membrane as a helical segment. Topologically, residues 46–59 (LTTKLTHTSTMDAQ) are mitochondrial matrix. The chain crosses the membrane as a helical span at residues 60-87 (EVETVWTILPAIILILIALPSLRILYMM). Residues 88 to 227 (DEINNPSLTV…YFEAWSALMV (140 aa)) lie on the Mitochondrial intermembrane side of the membrane. Positions 161, 196, 198, 200, 204, and 207 each coordinate Cu cation. A Mg(2+)-binding site is contributed by Glu198. Tyr218 bears the Phosphotyrosine mark.

Belongs to the cytochrome c oxidase subunit 2 family. Component of the cytochrome c oxidase (complex IV, CIV), a multisubunit enzyme composed of 14 subunits. The complex is composed of a catalytic core of 3 subunits MT-CO1, MT-CO2 and MT-CO3, encoded in the mitochondrial DNA, and 11 supernumerary subunits COX4I, COX5A, COX5B, COX6A, COX6B, COX6C, COX7A, COX7B, COX7C, COX8 and NDUFA4, which are encoded in the nuclear genome. The complex exists as a monomer or a dimer and forms supercomplexes (SCs) in the inner mitochondrial membrane with NADH-ubiquinone oxidoreductase (complex I, CI) and ubiquinol-cytochrome c oxidoreductase (cytochrome b-c1 complex, complex III, CIII), resulting in different assemblies (supercomplex SCI(1)III(2)IV(1) and megacomplex MCI(2)III(2)IV(2)). Found in a complex with TMEM177, COA6, COX18, COX20, SCO1 and SCO2. Interacts with TMEM177 in a COX20-dependent manner. Interacts with COX20. Interacts with COX16. The cofactor is Cu cation.

The protein resides in the mitochondrion inner membrane. The enzyme catalyses 4 Fe(II)-[cytochrome c] + O2 + 8 H(+)(in) = 4 Fe(III)-[cytochrome c] + 2 H2O + 4 H(+)(out). Functionally, component of the cytochrome c oxidase, the last enzyme in the mitochondrial electron transport chain which drives oxidative phosphorylation. The respiratory chain contains 3 multisubunit complexes succinate dehydrogenase (complex II, CII), ubiquinol-cytochrome c oxidoreductase (cytochrome b-c1 complex, complex III, CIII) and cytochrome c oxidase (complex IV, CIV), that cooperate to transfer electrons derived from NADH and succinate to molecular oxygen, creating an electrochemical gradient over the inner membrane that drives transmembrane transport and the ATP synthase. Cytochrome c oxidase is the component of the respiratory chain that catalyzes the reduction of oxygen to water. Electrons originating from reduced cytochrome c in the intermembrane space (IMS) are transferred via the dinuclear copper A center (CU(A)) of subunit 2 and heme A of subunit 1 to the active site in subunit 1, a binuclear center (BNC) formed by heme A3 and copper B (CU(B)). The BNC reduces molecular oxygen to 2 water molecules using 4 electrons from cytochrome c in the IMS and 4 protons from the mitochondrial matrix. The sequence is that of Cytochrome c oxidase subunit 2 (MT-CO2) from Cuon alpinus (Dhole).